A 161-amino-acid polypeptide reads, in one-letter code: RNA pyrophosphohydrolase (161 aa).

Positions 12 to 154 (PYRPGVGMMI…KRKLYQAVVK (143 aa)) constitute a Nudix hydrolase domain. The Nudix box signature appears at 46–67 (GGIVPGETPSIAAMREMLEEIG).

Belongs to the Nudix hydrolase family. RppH subfamily. The cofactor is a divalent metal cation.

Its function is as follows. Accelerates the degradation of transcripts by removing pyrophosphate from the 5'-end of triphosphorylated RNA, leading to a more labile monophosphorylated state that can stimulate subsequent ribonuclease cleavage. The chain is RNA pyrophosphohydrolase from Rickettsia typhi (strain ATCC VR-144 / Wilmington).